Consider the following 204-residue polypeptide: Small ribosomal subunit protein uS4 (204 aa).

In terms of domain architecture, S4 RNA-binding spans 94–157; sequence RRLDNVVYRL…KKLEVFKENL (64 aa).

Belongs to the universal ribosomal protein uS4 family. In terms of assembly, part of the 30S ribosomal subunit. Contacts protein S5. The interaction surface between S4 and S5 is involved in control of translational fidelity.

Its function is as follows. One of the primary rRNA binding proteins, it binds directly to 16S rRNA where it nucleates assembly of the body of the 30S subunit. With S5 and S12 plays an important role in translational accuracy. In Sulfurihydrogenibium sp. (strain YO3AOP1), this protein is Small ribosomal subunit protein uS4.